The following is a 265-amino-acid chain: Mlc titration factor A (265 aa).

The Zn(2+) site is built by H111, H148, H152, and E211.

It belongs to the MtfA family. Interacts with Mlc. Zn(2+) is required as a cofactor.

The protein localises to the cytoplasm. Functionally, involved in the modulation of the activity of the glucose-phosphotransferase system (glucose-PTS). Interacts with the transcriptional repressor Mlc, preventing its interaction with DNA and leading to the modulation of expression of genes regulated by Mlc, including ptsG, which encodes the PTS system glucose-specific EIICB component. Its function is as follows. Shows zinc-dependent metallopeptidase activity. In Escherichia coli (strain ATCC 8739 / DSM 1576 / NBRC 3972 / NCIMB 8545 / WDCM 00012 / Crooks), this protein is Mlc titration factor A.